A 203-amino-acid polypeptide reads, in one-letter code: Guanylate kinase (203 aa).

The Guanylate kinase-like domain maps to 3–181; it reads GSLFIVAAPS…AHTDLRAIVQ (179 aa). Residue 10–17 coordinates ATP; it reads APSGAGKT.

This sequence belongs to the guanylate kinase family.

It is found in the cytoplasm. The enzyme catalyses GMP + ATP = GDP + ADP. In terms of biological role, essential for recycling GMP and indirectly, cGMP. The chain is Guanylate kinase from Nitrosococcus oceani (strain ATCC 19707 / BCRC 17464 / JCM 30415 / NCIMB 11848 / C-107).